Reading from the N-terminus, the 539-residue chain is Protein ENTREP2 (539 aa).

Transmembrane regions (helical) follow at residues 31 to 51 (IVLALGATQMALGCLIVAVSF), 65 to 85 (SCPFWAGFSVLLSGLIGVVSW), 89 to 109 (LSLVITFFMLLSAVCVMLNLA), and 176 to 196 (LLFSVCALNVLSTIVCALATA). A disordered region spans residues 301–481 (VVGQPPASQV…TSKERPRSLV (181 aa)). The segment covering 306–331 (PASQVTSIGQQVAESSSGDPNTSAGF) has biased composition (polar residues). Residues 347–365 (GTATPGSSPSPDGPVGAPA) show a composition bias toward low complexity. Positions 395–408 (SRSTSDPTLCTSSM) are enriched in polar residues.

It belongs to the ENTREP family.

The protein resides in the membrane. This chain is Protein ENTREP2, found in Homo sapiens (Human).